Here is a 585-residue protein sequence, read N- to C-terminus: Efflux pump dotC (585 aa).

Over residues 1 to 34 (MSEDHTKADNLSEKDPHSPERSDSSSHEDAHARE) the composition is skewed to basic and acidic residues. Residues 1-45 (MSEDHTKADNLSEKDPHSPERSDSSSHEDAHAREEEESSDDDGAL) form a disordered region. A glycan (N-linked (GlcNAc...) asparagine) is linked at N10. Residues 35 to 44 (EEESSDDDGA) are compositionally biased toward acidic residues. Residues 51–71 (SLIAIVMIALSLIGLQLAVFL) traverse the membrane as a helical segment. A glycan (N-linked (GlcNAc...) asparagine) is linked at N91. 13 consecutive transmembrane segments (helical) span residues 94–114 (AAYTWVGSAYLLANAASTPIW), 132–152 (ALFMIGSLVCALSINVGMLIT), 158–178 (GAAGGGLLTLVDTIIGDLFSL), 186–206 (GMIGGVWAIACALGPIVGGAF), 214–234 (WCFYINLPIDGLAFGIIFFFL), 247–267 (FAAIDWAGSFFIIGGTLMFLF), 280–300 (SATVICLLVFGVVCIVLFGLV), 323–343 (ALLVAFFHSFVFTSAFYYLPL), 353–373 (PILAGVYILPAVLSTGVSAAA), 385–405 (LIPMYFGMSMMILGYGLLINF), 414–434 (LIIYQLIAGIGNGPNFQAPLV), 449–471 (TATFNFVRNIATAISVVAGQVLY), and 524–544 (SPMWIMYTAFAAAGLFCILLV). The segment at 564–585 (KKAEAERKAERQAKDLEKAQKS) is disordered.

It belongs to the major facilitator superfamily. TCR/Tet family.

The protein localises to the cell membrane. It localises to the vacuole membrane. In terms of biological role, efflux pump; part of the gene cluster that mediates the biosynthesis of dothistromin (DOTH), a polyketide toxin very similar in structure to the aflatoxin precursor, versicolorin B. One function of dotC may be to transport early-stage dothistromin biosynthetic intermediates from the cytoplasm into vacuoles, thereby affecting the rate of dothistromin production. This chain is Efflux pump dotC, found in Dothistroma septosporum (Red band needle blight fungus).